The sequence spans 287 residues: Phosphatidylserine decarboxylase proenzyme (287 aa).

Active-site charge relay system; for autoendoproteolytic cleavage activity residues include D90, H147, and S252. The Schiff-base intermediate with substrate; via pyruvic acid; for decarboxylase activity role is filled by S252. Position 252 is a pyruvic acid (Ser); by autocatalysis (S252).

The protein belongs to the phosphatidylserine decarboxylase family. PSD-B subfamily. Prokaryotic type I sub-subfamily. In terms of assembly, heterodimer of a large membrane-associated beta subunit and a small pyruvoyl-containing alpha subunit. Pyruvate serves as cofactor. Post-translationally, is synthesized initially as an inactive proenzyme. Formation of the active enzyme involves a self-maturation process in which the active site pyruvoyl group is generated from an internal serine residue via an autocatalytic post-translational modification. Two non-identical subunits are generated from the proenzyme in this reaction, and the pyruvate is formed at the N-terminus of the alpha chain, which is derived from the carboxyl end of the proenzyme. The autoendoproteolytic cleavage occurs by a canonical serine protease mechanism, in which the side chain hydroxyl group of the serine supplies its oxygen atom to form the C-terminus of the beta chain, while the remainder of the serine residue undergoes an oxidative deamination to produce ammonia and the pyruvoyl prosthetic group on the alpha chain. During this reaction, the Ser that is part of the protease active site of the proenzyme becomes the pyruvoyl prosthetic group, which constitutes an essential element of the active site of the mature decarboxylase.

The protein resides in the cell membrane. It catalyses the reaction a 1,2-diacyl-sn-glycero-3-phospho-L-serine + H(+) = a 1,2-diacyl-sn-glycero-3-phosphoethanolamine + CO2. It participates in phospholipid metabolism; phosphatidylethanolamine biosynthesis; phosphatidylethanolamine from CDP-diacylglycerol: step 2/2. Functionally, catalyzes the formation of phosphatidylethanolamine (PtdEtn) from phosphatidylserine (PtdSer). The protein is Phosphatidylserine decarboxylase proenzyme of Pseudomonas putida (strain W619).